The primary structure comprises 387 residues: 3-ketoacyl-CoA thiolase (387 aa).

C91 acts as the Acyl-thioester intermediate in catalysis. Catalysis depends on proton acceptor residues H343 and C373.

Belongs to the thiolase-like superfamily. Thiolase family. In terms of assembly, heterotetramer of two alpha chains (FadB) and two beta chains (FadA).

It is found in the cytoplasm. It catalyses the reaction an acyl-CoA + acetyl-CoA = a 3-oxoacyl-CoA + CoA. The protein operates within lipid metabolism; fatty acid beta-oxidation. In terms of biological role, catalyzes the final step of fatty acid oxidation in which acetyl-CoA is released and the CoA ester of a fatty acid two carbons shorter is formed. This chain is 3-ketoacyl-CoA thiolase, found in Salmonella choleraesuis (strain SC-B67).